The following is a 67-amino-acid chain: Large ribosomal subunit protein uL29 (67 aa).

The protein belongs to the universal ribosomal protein uL29 family.

This chain is Large ribosomal subunit protein uL29, found in Desulfitobacterium hafniense (strain Y51).